Consider the following 128-residue polypeptide: Adrenodoxin (128 aa).

Phosphoserine is present on serine 3. Lysine 6 is subject to N6-acetyllysine; alternate. An N6-succinyllysine; alternate modification is found at lysine 6. Residues 7-111 (VTVNFINRDG…NMTVRVPDAV (105 aa)) enclose the 2Fe-2S ferredoxin-type domain. Positions 46, 52, 55, and 92 each coordinate [2Fe-2S] cluster. Residue lysine 98 is modified to N6-succinyllysine. Residue serine 117 is modified to Phosphoserine.

It belongs to the adrenodoxin/putidaredoxin family. In terms of assembly, interacts with CYP11A1. It depends on [2Fe-2S] cluster as a cofactor.

The protein resides in the mitochondrion matrix. Essential for the synthesis of various steroid hormones. Participates in the reduction of mitochondrial cytochrome P450 for steroidogenesis. Transfers electrons from adrenodoxin reductase to CYP11A1, a cytochrome P450 that catalyzes cholesterol side-chain cleavage. Does not form a ternary complex with adrenodoxin reductase and CYP11A1 but shuttles between the two enzymes to transfer electrons. The sequence is that of Adrenodoxin (FDX1) from Ovis aries (Sheep).